The chain runs to 218 residues: Large ribosomal subunit protein uL3c (218 aa).

Positions 127–161 are disordered; that stretch reads GFSRGPMTHGSKNHREPGSTGAGTTPGRIYPGKRM.

Belongs to the universal ribosomal protein uL3 family. Part of the 50S ribosomal subunit.

It is found in the plastid. The protein localises to the organellar chromatophore. Its function is as follows. One of the primary rRNA binding proteins, it binds directly near the 3'-end of the 23S rRNA, where it nucleates assembly of the 50S subunit. This Paulinella chromatophora protein is Large ribosomal subunit protein uL3c (rpl3).